A 246-amino-acid chain; its full sequence is Homeobox protein Crxos (246 aa).

DNA-binding regions (homeobox) lie at residues 22-72 (WEQL…EMRP) and 129-182 (ELTD…RGYR). The Nuclear localization signal motif lies at 163–177 (RKDLIRSWFITQRHR).

Belongs to the paired homeobox family. As to expression, specifically expressed during the preimplantation stages of embryonic development, between the four-cell to eight-cell stage and the morula stage. Expressed in adult testis. Detected in early embryos; expression decreases gradually with embryonic development. Also expressed in extraembryonic tissues after E14.5, expression level increases drastically until E18.5, immediately before partum.

It localises to the nucleus. Transcription factor that acts as a regulator of embryonic stem cell differentiation during the preimplantation stages of embryonic development. In terms of biological role, transcription factor that acts as a positive regulator of embryonic stem cell differentiation. Functionally, transcription factor that promotes embryonic stem cell pluripotency. Its function is as follows. Transcription factor that promotes embryonic stem cell pluripotency. Also involved in extraembryonic tissues development by promoting the expression of placental prolactin family genes. The protein is Homeobox protein Crxos of Mus musculus (Mouse).